Reading from the N-terminus, the 98-residue chain is MSLVHINVLIAFTVSLTGLLMYRSHLMSALLCLEGMVLSLFILAALTILNTHFTLANMMPIILLVFAACEAAIGLALLVMVSNTYGTDYVQNLNLLQC.

3 consecutive transmembrane segments (helical) span residues 1-21 (MSLV…GLLM), 29-49 (ALLC…LTIL), and 61-81 (IILL…LVMV).

It belongs to the complex I subunit 4L family. In terms of assembly, core subunit of respiratory chain NADH dehydrogenase (Complex I) which is composed of 45 different subunits.

It is found in the mitochondrion inner membrane. It catalyses the reaction a ubiquinone + NADH + 5 H(+)(in) = a ubiquinol + NAD(+) + 4 H(+)(out). Core subunit of the mitochondrial membrane respiratory chain NADH dehydrogenase (Complex I) which catalyzes electron transfer from NADH through the respiratory chain, using ubiquinone as an electron acceptor. Part of the enzyme membrane arm which is embedded in the lipid bilayer and involved in proton translocation. The protein is NADH-ubiquinone oxidoreductase chain 4L (MT-ND4L) of Lagenorhynchus albirostris (White-beaked dolphin).